The following is a 485-amino-acid chain: Cobyric acid synthase (485 aa).

Residues 249-437 (HLKIRVPVWQ…WHGLFSQPSA (189 aa)) form the GATase cobBQ-type domain. Cys-330 serves as the catalytic Nucleophile. His-429 is an active-site residue.

Belongs to the CobB/CobQ family. CobQ subfamily.

Its pathway is cofactor biosynthesis; adenosylcobalamin biosynthesis. Catalyzes amidations at positions B, D, E, and G on adenosylcobyrinic A,C-diamide. NH(2) groups are provided by glutamine, and one molecule of ATP is hydrogenolyzed for each amidation. In Saccharophagus degradans (strain 2-40 / ATCC 43961 / DSM 17024), this protein is Cobyric acid synthase.